Here is a 99-residue protein sequence, read N- to C-terminus: Small ribosomal subunit protein uS19 (99 aa).

The disordered stretch occupies residues 76–99; that stretch reads PTRSFRGHAGGGKAEKGGSAPRKK.

This sequence belongs to the universal ribosomal protein uS19 family.

In terms of biological role, protein S19 forms a complex with S13 that binds strongly to the 16S ribosomal RNA. The chain is Small ribosomal subunit protein uS19 from Pelodictyon phaeoclathratiforme (strain DSM 5477 / BU-1).